Here is a 149-residue protein sequence, read N- to C-terminus: MAFHSLLLLCLAGLAFVSETAAVHHEGEHSKCPLMVKVLDAVRGRPAVNVDVKVFKKTEEQTWELFAAGKTNDNGEIHELTTDDKFGEGLYKVEFDTISYWKALGVSPFHEYADVVFTANDAGHRHYTIAALLSPYSFSTTAIVSNPTE.

The N-terminal stretch at 1 to 20 (MAFHSLLLLCLAGLAFVSET) is a signal peptide. Position 32 is a sulfocysteine (Cys32). Position 37 (Lys37) interacts with L-thyroxine. Glu64 carries the post-translational modification 4-carboxyglutamate. Glu76 and Ser139 together coordinate L-thyroxine.

It belongs to the transthyretin family. In terms of assembly, homotetramer. Dimer of dimers. In the homotetramer, subunits assemble around a central channel that can accommodate two ligand molecules. Interacts with RBP4. Post-translationally, sulfonation of the reactive cysteine Cys-32 enhances the stability of the native conformation of TTR, avoiding misassembly of the protein leading to amyloid formation.

The protein localises to the secreted. Functionally, thyroid hormone-binding protein. Probably transports thyroxine from the bloodstream to the brain. The chain is Transthyretin (TTR) from Notamacropus eugenii (Tammar wallaby).